The following is a 329-amino-acid chain: Glycerol-3-phosphate dehydrogenase [NAD(P)+] (329 aa).

Positions 14, 34, and 108 each coordinate NADPH. Residues Lys-108, Gly-137, and Ser-139 each coordinate sn-glycerol 3-phosphate. Ala-141 is an NADPH binding site. Lys-192, Asp-245, Ser-255, Arg-256, and Asn-257 together coordinate sn-glycerol 3-phosphate. Lys-192 acts as the Proton acceptor in catalysis. Arg-256 is a binding site for NADPH. 2 residues coordinate NADPH: Ile-280 and Glu-282.

The protein belongs to the NAD-dependent glycerol-3-phosphate dehydrogenase family.

The protein localises to the cytoplasm. The catalysed reaction is sn-glycerol 3-phosphate + NAD(+) = dihydroxyacetone phosphate + NADH + H(+). It catalyses the reaction sn-glycerol 3-phosphate + NADP(+) = dihydroxyacetone phosphate + NADPH + H(+). Its pathway is membrane lipid metabolism; glycerophospholipid metabolism. In terms of biological role, catalyzes the reduction of the glycolytic intermediate dihydroxyacetone phosphate (DHAP) to sn-glycerol 3-phosphate (G3P), the key precursor for phospholipid synthesis. In Wigglesworthia glossinidia brevipalpis, this protein is Glycerol-3-phosphate dehydrogenase [NAD(P)+].